A 345-amino-acid polypeptide reads, in one-letter code: Flap endonuclease 1 (345 aa).

The segment at 1–103 (MGIKQLSKLL…KELEKRKERR (103 aa)) is N-domain. Asp-34 provides a ligand contact to Mg(2+). DNA is bound by residues Arg-47 and Arg-69. Asp-85, Glu-157, Glu-159, Asp-178, and Asp-180 together coordinate Mg(2+). The segment at 121–252 (LMEMYDKRKT…KKALGLIKKH (132 aa)) is I-domain. Residue Glu-157 participates in DNA binding. Residues Gly-230 and Asp-232 each coordinate DNA. Mg(2+) is bound at residue Asp-232. The interaction with PCNA stretch occupies residues 333–341 (TQGRLDCFI).

Belongs to the XPG/RAD2 endonuclease family. FEN1 subfamily. As to quaternary structure, interacts with PCNA. Three molecules of FEN1 bind to one PCNA trimer with each molecule binding to one PCNA monomer. PCNA stimulates the nuclease activity without altering cleavage specificity. The cofactor is Mg(2+). Phosphorylated. Phosphorylation upon DNA damage induces relocalization to the nuclear plasma.

Its subcellular location is the nucleus. It localises to the nucleolus. The protein localises to the nucleoplasm. It is found in the mitochondrion. Its function is as follows. Structure-specific nuclease with 5'-flap endonuclease and 5'-3' exonuclease activities involved in DNA replication and repair. During DNA replication, cleaves the 5'-overhanging flap structure that is generated by displacement synthesis when DNA polymerase encounters the 5'-end of a downstream Okazaki fragment. It enters the flap from the 5'-end and then tracks to cleave the flap base, leaving a nick for ligation. Also involved in the long patch base excision repair (LP-BER) pathway, by cleaving within the apurinic/apyrimidinic (AP) site-terminated flap. Acts as a genome stabilization factor that prevents flaps from equilibrating into structures that lead to duplications and deletions. Also possesses 5'-3' exonuclease activity on nicked or gapped double-stranded DNA, and exhibits RNase H activity. Also involved in replication and repair of rDNA and in repairing mitochondrial DNA. This Encephalitozoon cuniculi (strain GB-M1) (Microsporidian parasite) protein is Flap endonuclease 1.